Consider the following 167-residue polypeptide: Endoribonuclease YbeY (167 aa).

Positions 131, 135, and 141 each coordinate Zn(2+).

Belongs to the endoribonuclease YbeY family. The cofactor is Zn(2+).

It is found in the cytoplasm. Functionally, single strand-specific metallo-endoribonuclease involved in late-stage 70S ribosome quality control and in maturation of the 3' terminus of the 16S rRNA. This chain is Endoribonuclease YbeY, found in Rickettsia conorii (strain ATCC VR-613 / Malish 7).